The sequence spans 263 residues: Granzyme K (263 aa).

A signal peptide spans 1 to 21; sequence MRFSSWALVSLVAGVYMSSEC. Positions 22–25 are cleaved as a propeptide — activation peptide; sequence FHTE. The Peptidase S1 domain occupies 26–258; the sequence is IIGGREVQPH…YQTWIKSKLA (233 aa). Cysteine 51 and cysteine 67 are disulfide-bonded. Residues histidine 66 and aspartate 115 each act as charge relay system in the active site. 3 cysteine pairs are disulfide-bonded: cysteine 148–cysteine 219, cysteine 180–cysteine 198, and cysteine 209–cysteine 233. Serine 213 functions as the Charge relay system in the catalytic mechanism.

Belongs to the peptidase S1 family. Granzyme subfamily.

It is found in the cytoplasmic granule. The polypeptide is Granzyme K (Gzmk) (Mus musculus (Mouse)).